The primary structure comprises 480 residues: RNA-binding protein 42 (480 aa).

The segment at 1–30 (MAGAGPAPGLPGAGGPVVPGPGAGIPGKSG) is disordered. An N-acetylalanine modification is found at alanine 2. Gly residues predominate over residues 11–27 (PGAGGPVVPGPGAGIPG). At serine 135 the chain carries Phosphoserine. An asymmetric dimethylarginine mark is found at arginine 153, arginine 158, arginine 168, and arginine 181. Residues 236 to 480 (ELGLGLGLGL…QKEKKKLGLR (245 aa)) are necessary for interaction with HNRNPK. The tract at residues 319-356 (SLRPRPRPPRPEPPPGLMALEVPEPLGEDKKKGKPEKL) is disordered. Basic and acidic residues predominate over residues 345-356 (GEDKKKGKPEKL). In terms of domain architecture, RRM spans 381–459 (FRIFCGDLGN…RPIKLRKSMW (79 aa)).

This sequence belongs to the RRM RBM42 family. In terms of assembly, interacts with HNRNPK.

It localises to the nucleus. The protein resides in the cytoplasm. Its function is as follows. Binds (via the RRM domain) to the 3'-untranslated region (UTR) of CDKN1A mRNA. This is RNA-binding protein 42 (RBM42) from Homo sapiens (Human).